Here is a 204-residue protein sequence, read N- to C-terminus: MRTLDKRIAPNVKLAASLVARAPTLTLAYDARCKSRLAATLDTGEDVAVLLPRGTVLRDGDVLVADDGALVRIAAAPETVLLVRAADPLTLMRAAYHLGNRHTPVEIGDGYLKLEADPVLADMLRRLGTQVDETHAPFQPEAGAYGGGHKHGHDATFAEDYALAQQVFGEHHGHAHSHDHDHDHDHDHQHGPGCTHGHHGHDHH.

The segment covering 172–190 has biased composition (basic and acidic residues); the sequence is HGHAHSHDHDHDHDHDHQH. The interval 172–204 is disordered; it reads HGHAHSHDHDHDHDHDHQHGPGCTHGHHGHDHH.

It belongs to the UreE family.

Its subcellular location is the cytoplasm. Involved in urease metallocenter assembly. Binds nickel. Probably functions as a nickel donor during metallocenter assembly. This chain is Urease accessory protein UreE, found in Burkholderia orbicola (strain AU 1054).